The following is a 1381-amino-acid chain: Hepatocyte growth factor receptor (1381 aa).

Positions 1-24 (MKAPAVLAPGILVLLFTLVQKSKG) are cleaved as a signal peptide. Residues 25 to 932 (ECKEALVKST…VIVQPDQNFT (908 aa)) lie on the Extracellular side of the membrane. A Sema domain is found at 27–515 (KEALVKSTMN…TGKKITKIPL (489 aa)). Asn-45 carries an N-linked (GlcNAc...) asparagine glycan. 4 disulfide bridges follow: Cys-95–Cys-101, Cys-98–Cys-160, Cys-133–Cys-141, and Cys-173–Cys-176. Asn-106 carries an N-linked (GlcNAc...) asparagine glycan. Asn-203 and Asn-359 each carry an N-linked (GlcNAc...) asparagine glycan. 2 disulfide bridges follow: Cys-299-Cys-364 and Cys-386-Cys-398. Asn-400 and Asn-406 each carry an N-linked (GlcNAc...) asparagine glycan. 4 cysteine pairs are disulfide-bonded: Cys-520–Cys-538, Cys-526–Cys-561, Cys-529–Cys-545, and Cys-541–Cys-551. IPT/TIG domains lie at 563–655 (PTVY…FSYV), 657–739 (PVIT…FTYR), and 742–836 (PIVY…LIYV). Thr-582 is a glycosylation site (O-linked (Man) threonine). 2 N-linked (GlcNAc...) asparagine glycosylation sites follow: Asn-607 and Asn-635. 2 O-linked (Man) threonine glycosylation sites follow: Thr-676 and Thr-761. N-linked (GlcNAc...) asparagine glycosylation is found at Asn-785, Asn-879, and Asn-930. The chain crosses the membrane as a helical span at residues 933 to 955 (GLIVGVVSISIILLLLLGLFLWL). Over 956-1381 (KKRKQIKDLG…QDNVDGEGDT (426 aa)) the chain is Cytoplasmic. Phosphoserine is present on Ser-966. Thr-977 carries the phosphothreonine modification. Ser-990 and Ser-997 each carry phosphoserine. At Tyr-1003 the chain carries Phosphotyrosine. The 268-residue stretch at 1078-1345 (VHFNEVIGRG…RISAIFSTFI (268 aa)) folds into the Protein kinase domain. ATP is bound by residues 1084–1092 (IGRGHFGCV) and Lys-1110. Asp-1204 functions as the Proton acceptor in the catalytic mechanism. The interaction with RANBP9 stretch occupies residues 1212–1381 (LDEKFTVKVA…QDNVDGEGDT (170 aa)). Tyr-1230 bears the Phosphotyrosine mark. 2 positions are modified to phosphotyrosine; by autocatalysis: Tyr-1234 and Tyr-1235. Thr-1289 carries the phosphothreonine modification. Positions 1320–1359 (WHPRAELRPSFSELVSRISAIFSTFIGEHYVHVNATYVNV) are interaction with MUC20. Phosphotyrosine; by autocatalysis is present on residues Tyr-1349 and Tyr-1356. Position 1365 is a phosphotyrosine (Tyr-1365).

Belongs to the protein kinase superfamily. Tyr protein kinase family. Heterodimer made of an alpha chain (50 kDa) and a beta chain (145 kDa) which are disulfide linked. Binds PLXNB1. Interacts when phosphorylated with downstream effectors including STAT3, PIK3R1, SRC, PCLG1, GRB2 and GAB1. Interacts with SPSB1, SPSB2 and SPSB4. Interacts with INPP5D/SHIP1. When phosphorylated at Tyr-1356, interacts with INPPL1/SHIP2. Interacts with RANBP9 and RANBP10, as well as SPSB1, SPSB2, SPSB3 and SPSB4. SPSB1 binding occurs in the presence and in the absence of HGF, however HGF treatment has a positive effect on this interaction. Interacts with MUC20; prevents interaction with GRB2 and suppresses hepatocyte growth factor-induced cell proliferation. Interacts with GRB10. Interacts with PTPN1 and PTPN2. Interacts with HSP90AA1 and HSP90AB1; the interaction suppresses MET kinase activity. Interacts with tensin TNS3. Interacts (when phosphorylated) with tensin TNS4 (via SH2 domain); the interaction increases MET protein stability by inhibiting MET endocytosis and subsequent lysosomal degradation. Autophosphorylated in response to ligand binding on Tyr-1234 and Tyr-1235 in the kinase domain leading to further phosphorylation of Tyr-1349 and Tyr-1356 in the C-terminal multifunctional docking site. Dephosphorylated by PTPRJ at Tyr-1349 and Tyr-1365. Dephosphorylated by PTPN1 and PTPN2. Post-translationally, ubiquitinated. Ubiquitination by CBL regulates the receptor stability and activity through proteasomal degradation. In terms of processing, O-mannosylation of IPT/TIG domains by TMEM260 is required for protein maturation. O-mannosylated residues are composed of single mannose glycans that are not elongated or modified.

Its subcellular location is the membrane. It carries out the reaction L-tyrosyl-[protein] + ATP = O-phospho-L-tyrosyl-[protein] + ADP + H(+). With respect to regulation, in its inactive state, the C-terminal tail interacts with the catalytic domain and inhibits the kinase activity. Upon ligand binding, the C-terminal tail is displaced and becomes phosphorylated, thus increasing the kinase activity. Functionally, receptor tyrosine kinase that transduces signals from the extracellular matrix into the cytoplasm by binding to hepatocyte growth factor/HGF ligand. Regulates many physiological processes including proliferation, scattering, morphogenesis and survival. Ligand binding at the cell surface induces autophosphorylation of MET on its intracellular domain that provides docking sites for downstream signaling molecules. Following activation by ligand, interacts with the PI3-kinase subunit PIK3R1, PLCG1, SRC, GRB2, STAT3 or the adapter GAB1. Recruitment of these downstream effectors by MET leads to the activation of several signaling cascades including the RAS-ERK, PI3 kinase-AKT, or PLCgamma-PKC. The RAS-ERK activation is associated with the morphogenetic effects while PI3K/AKT coordinates prosurvival effects. During embryonic development, MET signaling plays a role in gastrulation, development and migration of muscles and neuronal precursors, angiogenesis and kidney formation. In adults, participates in wound healing as well as organ regeneration and tissue remodeling. Also promotes differentiation and proliferation of hematopoietic cells. The protein is Hepatocyte growth factor receptor (MET) of Sus scrofa (Pig).